A 271-amino-acid polypeptide reads, in one-letter code: MTKTELKPILVFDSGIGGLTVLREARVLMPERHFIYVADDAGFPYGGWEEGALKERVIALFGRLLAEHDPEICIIACNTAFTLVGADLRIVYPQMTFVGTVPAIKPAAERTRSGLVSVLATPGTVKRAYTRDLIQSFASQCHVRLVGSENLARMAEAYIRGEALTDDAVRAEIAPCFVEVDGKRTDIVVLACTHYPFVANVFRRLAPWPVDWLDPAEAIARRARSLVPLPNGFEPLNGEDPAIFTSGKPDFATRRLMQGFGLKVAAVGSLG.

Substrate contacts are provided by residues 13–14 and 45–46; these read DS and YG. The active-site Proton donor/acceptor is Cys77. 78 to 79 is a binding site for substrate; the sequence is NT. Cys192 functions as the Proton donor/acceptor in the catalytic mechanism. 193–194 is a substrate binding site; it reads TH.

Belongs to the aspartate/glutamate racemases family.

It catalyses the reaction L-glutamate = D-glutamate. It participates in cell wall biogenesis; peptidoglycan biosynthesis. Functionally, provides the (R)-glutamate required for cell wall biosynthesis. The polypeptide is Glutamate racemase (Sinorhizobium medicae (strain WSM419) (Ensifer medicae)).